Consider the following 828-residue polypeptide: Vacuolar transporter chaperone complex subunit 2 (828 aa).

The SPX domain maps to 1–146 (MLFGVKLANE…PKYPSVKSLL (146 aa)). At 1–693 (MLFGVKLANE…EAKVWLANER (693 aa)) the chain is on the cytoplasmic side. The tract at residues 127 to 134 (KIVKKHDK) is important for inositol polyphosphate binding. Ser182, Ser187, Ser196, Ser264, Ser583, Ser615, and Ser616 each carry phosphoserine. The segment at 580–636 (RRLSNLKEPQHQAAVPVSQEENERITSQGDLEADGSSDEETEQEPHSKRSKKVRRRK) is disordered. Residues 610–621 (LEADGSSDEETE) show a composition bias toward acidic residues. Phosphothreonine is present on Thr620. A Phosphoserine modification is found at Ser626. Residues 627 to 636 (KRSKKVRRRK) show a composition bias toward basic residues. Ser657 carries the phosphoserine modification. Residues 694–716 (TFNRWLSVTSLLSVLTFSIYNSV) form a helical membrane-spanning segment. The Vacuolar portion of the chain corresponds to 717–727 (KKAEYPTLANY). The chain crosses the membrane as a helical span at residues 728–748 (MAYVYFGLTIFCALWSYSIYM). The Cytoplasmic portion of the chain corresponds to 749–766 (KRVDIIQQRSGQHLDAPL). A helical membrane pass occupies residues 767 to 787 (GPVLVSIVLFVTLVVNFVMAF). Over 788-828 (RNAAKSRQELQIQNLEVPERIPEVLRPLQNYLFKLMGPSSD) the chain is Vacuolar.

Belongs to the VTC2/3 family. The VTC core complex is an integral membrane heterooligomer composed of the catalytic subunit VTC4 and the accessory subunits VTC1, VTC2 and VTC3. The complex exists in 2 different sub-complexes: VTC1-VTC2-VCT4 and VCT1-VTC3-VTC4. The VCT1-VTC3-VTC4 subcomplex is mostly found on the vacuolar membrane. The VTC1-VTC2-VCT4 subcomplex is observed in the cell periphery, probably ER and nuclear envelope, but localizes to the vacuole under phosphate starvation. Each subunit contains 3 transmembrane helices. VTC1 is a small membrane protein without hydrophilic domain. VTC2, VTC3 and VTC4 are related and have 2 hydrophilic domains that face the cytosol, an N-terminal SPX domain and the central core domain. The central core in VTC4 is the catalytic domain, with the essential catalytic lysine replaced by isoleucine and leucine in VTC2 and VTC3, respectively. The core complex associates with the accessory subunit VTC5. The complex interacts with the v-SNARE NYV1 and with the V(0) subunit of V-ATPase VPH1.

The protein resides in the vacuole membrane. It is found in the cytoplasm. Its subcellular location is the cell cortex. The protein localises to the endoplasmic reticulum membrane. It localises to the cytoplasmic vesicle. The protein resides in the autophagosome membrane. In terms of biological role, accessory subunit of the vacuolar transporter chaperone (VTC) complex. The VTC complex acts as a vacuolar polyphosphate polymerase that catalyzes the synthesis of inorganic polyphosphate (polyP) via transfer of phosphate from ATP to a growing polyP chain, releasing ADP. VTC exposes its catalytic domain VTC4 to the cytosol, where the growing polyP chain winds through a tunnel-shaped pocket, integrating cytoplasmic polymer synthesis with polyP membrane translocation. The VTC complex carries 9 vacuolar transmembrane domains, which are likely to constitute the translocation channel into the organelle lumen. PolyP synthesis is tightly coupled to its transport into the vacuole lumen, in order to avoid otherwise toxic intermediates in the cytosol, and it depends on the proton gradient across the membrane, formed by V-ATPase. Binds inositol hexakisphosphate (Ins6P) and similar inositol polyphosphates, such as 5-diphospho-inositol pentakisphosphate (5-InsP7); these are important intracellular signaling molecules. Inositol polyphosphate binding promotes vacuolar polyphosphate synthesis. The VTC complex also plays a role in vacuolar membrane fusion. Required for SEC18/NSF activity in SNARE priming, membrane binding of LMA1 and V(0) trans-complex formation. This chain is Vacuolar transporter chaperone complex subunit 2, found in Saccharomyces cerevisiae (strain ATCC 204508 / S288c) (Baker's yeast).